The chain runs to 61 residues: Small ribosomal subunit protein uS14 (61 aa).

Zn(2+)-binding residues include cysteine 24, cysteine 27, cysteine 40, and cysteine 43.

It belongs to the universal ribosomal protein uS14 family. Zinc-binding uS14 subfamily. In terms of assembly, part of the 30S ribosomal subunit. Contacts proteins S3 and S10. Zn(2+) is required as a cofactor.

Binds 16S rRNA, required for the assembly of 30S particles and may also be responsible for determining the conformation of the 16S rRNA at the A site. The sequence is that of Small ribosomal subunit protein uS14 from Endomicrobium trichonymphae.